We begin with the raw amino-acid sequence, 1109 residues long: Protein translocase subunit SecA (1109 aa).

ATP contacts are provided by residues Q175, 193-197, and D695; that span reads GEGKT. Residues 1038–1109 form a disordered region; sequence VRQAAPEQRQ…KYKNCHGRNS (72 aa). Basic and acidic residues-rich tracts occupy residues 1045-1059 and 1071-1088; these read QRQD…KQDL and DTRE…KTVG. 4 residues coordinate Zn(2+): C1093, C1095, C1104, and H1105. Residues 1099-1109 show a composition bias toward basic residues; that stretch reads KKYKNCHGRNS.

The protein belongs to the SecA family. In terms of assembly, monomer and homodimer. Part of the essential Sec protein translocation apparatus which comprises SecA, SecYEG and auxiliary proteins SecDF. Other proteins may also be involved. Zn(2+) is required as a cofactor.

It localises to the cell inner membrane. It is found in the cytoplasm. The catalysed reaction is ATP + H2O + cellular proteinSide 1 = ADP + phosphate + cellular proteinSide 2.. In terms of biological role, part of the Sec protein translocase complex. Interacts with the SecYEG preprotein conducting channel. Has a central role in coupling the hydrolysis of ATP to the transfer of proteins into and across the cell membrane, serving as an ATP-driven molecular motor driving the stepwise translocation of polypeptide chains across the membrane. The sequence is that of Protein translocase subunit SecA from Bacteroides fragilis (strain ATCC 25285 / DSM 2151 / CCUG 4856 / JCM 11019 / LMG 10263 / NCTC 9343 / Onslow / VPI 2553 / EN-2).